A 361-amino-acid chain; its full sequence is Diacylglycerol O-acyltransferase 2 (361 aa).

Topologically, residues 1–42 are cytoplasmic; the sequence is MKTILAAYSGVKKGSGSSILSALHDLPTVPWLTRSKMVKHLQ. A helical transmembrane segment spans residues 43–61; sequence VISVLQFIMTFLTMGIACS. Topologically, residues 62–65 are lumenal; the sequence is LLLM. The helical transmembrane segment at 66–85 threads the bilayer; the sequence is YMFCTDFWVISVLYVAWLIY. Topologically, residues 86-361 are cytoplasmic; sequence DWNTPGQGGR…LNESDTLIIH (276 aa).

This sequence belongs to the diacylglycerol acyltransferase family.

It is found in the endoplasmic reticulum membrane. The protein resides in the lipid droplet. The protein localises to the cytoplasm. Its subcellular location is the perinuclear region. The enzyme catalyses an acyl-CoA + a 1,2-diacyl-sn-glycerol = a triacyl-sn-glycerol + CoA. It carries out the reaction all-trans-retinol + an acyl-CoA = an all-trans-retinyl ester + CoA. It catalyses the reaction 2-(9Z-octadecenoyl)-glycerol + (9Z)-octadecenoyl-CoA = 1,2-di-(9Z-octadecenoyl)-sn-glycerol + CoA. The catalysed reaction is 1,2-di-(9Z-octadecenoyl)-sn-glycerol + (9Z)-octadecenoyl-CoA = 1,2,3-tri-(9Z-octadecenoyl)-glycerol + CoA. The enzyme catalyses all-trans-retinol + hexadecanoyl-CoA = all-trans-retinyl hexadecanoate + CoA. It carries out the reaction 1-O-(9Z-octadecenyl)-glycerol + (9Z)-octadecenoyl-CoA = 1-O-(9Z-octadecyl)-3-(9Z-octadecenoyl)-glycerol + CoA. It catalyses the reaction 1-(9Z-octadecenoyl)-glycerol + (9Z)-octadecenoyl-CoA = 1,2-di-(9Z-octadecenoyl)-glycerol + CoA. The catalysed reaction is 1,2-di-(9Z-octadecenoyl)-sn-glycerol + hexadecanoyl-CoA = 1,2-di-(9Z)-octadecenoyl-3-hexadecanoyl-sn-glycerol + CoA. The enzyme catalyses 1,3-di-(9Z-octadecenoyl)-glycerol + (9Z)-octadecenoyl-CoA = 1,2,3-tri-(9Z-octadecenoyl)-glycerol + CoA. It carries out the reaction 2,3-di-(9Z)-octadecenoyl-sn-glycerol + (9Z)-octadecenoyl-CoA = 1,2,3-tri-(9Z-octadecenoyl)-glycerol + CoA. It catalyses the reaction 2-(9Z-octadecenoyl)-glycerol + hexadecanoyl-CoA = 1-hexadecanoyl-2-(9Z-octadecenoyl)-sn-glycerol + CoA. Its pathway is glycerolipid metabolism; triacylglycerol biosynthesis. Its function is as follows. Essential acyltransferase that catalyzes the terminal and only committed step in triacylglycerol synthesis by using diacylglycerol and fatty acyl CoA as substrates. Required for synthesis and storage of intracellular triglycerides. Probably plays a central role in cytosolic lipid accumulation. This is Diacylglycerol O-acyltransferase 2 (dgat2) from Danio rerio (Zebrafish).